The sequence spans 523 residues: AarF domain-containing protein kinase 1 (523 aa).

One can recognise a Protein kinase domain in the interval Glu-148–Leu-484. Residues Leu-154 to Val-162 and Lys-176 contribute to the ATP site. Asp-308 acts as the Proton acceptor in catalysis.

This sequence belongs to the protein kinase superfamily. ADCK protein kinase family.

The protein localises to the mitochondrion. In terms of biological role, appears to be essential for maintaining mitochondrial cristae formation and mitochondrial function by acting via YME1L1 in a kinase-independent manner to regulate essential mitochondrial structural proteins OPA1 and IMMT. The action of this enzyme is not yet clear. It is not known if it has protein kinase activity and what type of substrate it would phosphorylate (Ser, Thr or Tyr). The sequence is that of AarF domain-containing protein kinase 1 (adck1) from Xenopus tropicalis (Western clawed frog).